The chain runs to 203 residues: dTTP/UTP pyrophosphatase (203 aa).

The Proton acceptor role is filled by D70.

This sequence belongs to the Maf family. YhdE subfamily. Requires a divalent metal cation as cofactor.

Its subcellular location is the cytoplasm. It carries out the reaction dTTP + H2O = dTMP + diphosphate + H(+). It catalyses the reaction UTP + H2O = UMP + diphosphate + H(+). Its function is as follows. Nucleoside triphosphate pyrophosphatase that hydrolyzes dTTP and UTP. May have a dual role in cell division arrest and in preventing the incorporation of modified nucleotides into cellular nucleic acids. This chain is dTTP/UTP pyrophosphatase (maf-1), found in Pseudomonas putida (strain ATCC 47054 / DSM 6125 / CFBP 8728 / NCIMB 11950 / KT2440).